Reading from the N-terminus, the 211-residue chain is Glutathione S-transferase class-mu 28 kDa isozyme (211 aa).

The residue at position 2 (alanine 2) is an N-acetylalanine. The GST N-terminal domain maps to 4 to 86 (EHIKVIYFDG…YMAKKHHMMG (83 aa)). Glutathione-binding positions include tyrosine 10, 10–11 (YF), arginine 16, 41–45 (WPKIK), leucine 53, 55–56 (AV), and 70–71 (ES). The GST C-terminal domain occupies 88–211 (TDEEYYSVEK…YLSNRPATPF (124 aa)).

Belongs to the GST superfamily. Mu family. In terms of assembly, homodimer. In the adult, expressed in excretory epithelial cells but absent from the caecal epithelium and flame cells. Also expressed in the tegument and its extensions into the parenchyma. In the schistosomulum, expressed in the tegument and associated structures. Not expressed in digestive tract, reproductive organs or muscles (at protein level).

The enzyme catalyses RX + glutathione = an S-substituted glutathione + a halide anion + H(+). Functionally, conjugation of reduced glutathione to a wide number of exogenous and endogenous hydrophobic electrophiles. GST isoenzymes appear to play a central role in the parasite detoxification system. Other functions are also suspected including a role in increasing the solubility of haematin in the parasite gut. The protein is Glutathione S-transferase class-mu 28 kDa isozyme (GST28) of Schistosoma mansoni (Blood fluke).